A 207-amino-acid polypeptide reads, in one-letter code: Probable HTH-type transcriptional regulator YttP (207 aa).

The HTH tetR-type domain occupies 3–63 (VSTKDKIIES…HLVSEFYEGY (61 aa)). The H-T-H motif DNA-binding region spans 26-45 (SVREIAKSADVNVAHISYYF).

In Bacillus subtilis (strain 168), this protein is Probable HTH-type transcriptional regulator YttP (yttP).